Reading from the N-terminus, the 96-residue chain is Large ribosomal subunit protein eL21 (96 aa).

The protein belongs to the eukaryotic ribosomal protein eL21 family.

This is Large ribosomal subunit protein eL21 from Methanosphaerula palustris (strain ATCC BAA-1556 / DSM 19958 / E1-9c).